A 303-amino-acid polypeptide reads, in one-letter code: Putative AraC-like transcription regulator (303 aa).

The HTH araC/xylS-type domain maps to 202–300 (ASALTFLHRD…GMNPGDYRKH (99 aa)). DNA-binding regions (H-T-H motif) lie at residues 219–240 (AELA…KATV) and 267–290 (LAAI…KRVL).

In Streptomyces antibioticus, this protein is Putative AraC-like transcription regulator.